A 154-amino-acid chain; its full sequence is Myoglobin (154 aa).

The Globin domain occupies glycine 2 to lysine 148. Residue serine 4 is modified to Phosphoserine. Residue histidine 65 coordinates nitrite. Histidine 65 is a binding site for O2. Phosphothreonine is present on threonine 68. Heme b is bound at residue histidine 94.

Belongs to the globin family. As to quaternary structure, monomeric.

It is found in the cytoplasm. Its subcellular location is the sarcoplasm. The enzyme catalyses Fe(III)-heme b-[protein] + nitric oxide + H2O = Fe(II)-heme b-[protein] + nitrite + 2 H(+). It catalyses the reaction H2O2 + AH2 = A + 2 H2O. Monomeric heme protein which primary function is to store oxygen and facilitate its diffusion within muscle tissues. Reversibly binds oxygen through a pentacoordinated heme iron and enables its timely and efficient release as needed during periods of heightened demand. Depending on the oxidative conditions of tissues and cells, and in addition to its ability to bind oxygen, it also has a nitrite reductase activity whereby it regulates the production of bioactive nitric oxide. Under stress conditions, like hypoxia and anoxia, it also protects cells against reactive oxygen species thanks to its pseudoperoxidase activity. This chain is Myoglobin (MB), found in Aotus trivirgatus (Three-striped night monkey).